Reading from the N-terminus, the 533-residue chain is Tyrosinase (533 aa).

The first 18 residues, 1–18 (MFLAVLYCLLWSFQISDG), serve as a signal peptide directing secretion. The Lumenal, melanosome portion of the chain corresponds to 19-476 (HFPRACASSK…YLEQASRIWP (458 aa)). N-linked (GlcNAc...) asparagine glycosylation is found at Asn86, Asn111, and Asn161. Residues His180, His202, and His211 each contribute to the Cu cation site. 2 N-linked (GlcNAc...) asparagine glycosylation sites follow: Asn230 and Asn337. His363 and His367 together coordinate Cu cation. N-linked (GlcNAc...) asparagine glycosylation is present at Asn371. His390 serves as a coordination point for Cu cation. A helical transmembrane segment spans residues 477-497 (WLLGAALVGAVIAAALSGLSS). At 498 to 533 (RLCLQKKKKKKQPQEERQPLLMDKDDYHSLLYQSHL) the chain is on the cytoplasmic side.

It belongs to the tyrosinase family. In terms of assembly, forms an OPN3-dependent complex with DCT in response to blue light in melanocytes. Cu(2+) serves as cofactor. Post-translationally, glycosylated. As to expression, expressed in the skin.

Its subcellular location is the melanosome membrane. It is found in the melanosome. The catalysed reaction is 2 L-dopa + O2 = 2 L-dopaquinone + 2 H2O. The enzyme catalyses L-tyrosine + O2 = L-dopaquinone + H2O. It catalyses the reaction 2 5,6-dihydroxyindole-2-carboxylate + O2 = 2 indole-5,6-quinone-2-carboxylate + 2 H2O. Functionally, this is a copper-containing oxidase that functions in the formation of pigments such as melanins and other polyphenolic compounds. Catalyzes the initial and rate limiting step in the cascade of reactions leading to melanin production from tyrosine. In addition to hydroxylating tyrosine to DOPA (3,4-dihydroxyphenylalanine), also catalyzes the oxidation of DOPA to DOPA-quinone, and possibly the oxidation of DHI (5,6-dihydroxyindole) to indole-5,6 quinone. The protein is Tyrosinase (Tyr) of Mus musculus (Mouse).